We begin with the raw amino-acid sequence, 543 residues long: Ipecoside beta-D-glucosidase IpeGLU1 (543 aa).

A beta-D-glucoside is bound by residues glutamine 36, histidine 140, 185–186 (NE), tyrosine 350, glutamate 422, tryptophan 471, and phenylalanine 487. The Proton donor role is filled by glutamate 186. Glutamate 422 acts as the Nucleophile in catalysis.

Belongs to the glycosyl hydrolase 1 family. As to expression, expressed in roots.

It localises to the cytoplasm. It is found in the cytosol. It carries out the reaction deacetylipecoside + H2O = deacetylipecoside aglycone + D-glucose. The catalysed reaction is deacetylisoipecoside + H2O = deacetylisoipecoside aglycone + D-glucose. The enzyme catalyses 6-O-methyldeacetylipecoside + H2O = 6-O-methyldeacetylipecoside aglycone + D-glucose. It catalyses the reaction 6-O-methyldeacetylisoipecoside + H2O = 6-O-methyldeacetylisoipecoside aglycone + D-glucose. It carries out the reaction ipecoside + H2O = ipecoside aglycone + D-glucose. The catalysed reaction is 3alpha(S)-strictosidine + H2O = strictosidine aglycone + D-glucose. The protein operates within alkaloid biosynthesis. Inhibited by Cu(2+), Fe(2+) and Zn(2+). Functionally, beta-glucosidase involved in the biosynthesis of ipecac and benzylisoquinoline monoterpenoid-isoquinoline alkaloids natural products, starting by the condensation of dopamine and secologanin, and including emetine and cephaeline, drugs used both as anti-protozoal (e.g. treatment of ameobiasis) and as emetic agents. In response to pathogen and herbivore attack, triggers the release of toxic ipecoside aglycon to trigger defense responses. Catalyzes deglucosylation both on (1S)-diastereomer and (1R)-diastereomer substrates, including ipecoside, the main alkaloidal glucoside. Also active on N-deacetylisoipecoside, 6-O-methyl-N-deacetylisoipecoside, 6-O-methyl-N-deacetylipecoside and N-deacetylipecoside. The sequence is that of Ipecoside beta-D-glucosidase IpeGLU1 from Carapichea ipecacuanha (Ipecac).